Here is an 83-residue protein sequence, read N- to C-terminus: Small ribosomal subunit protein bS16 (83 aa).

Belongs to the bacterial ribosomal protein bS16 family.

This chain is Small ribosomal subunit protein bS16, found in Pseudomonas aeruginosa (strain LESB58).